The following is a 529-amino-acid chain: Bifunctional purine biosynthesis protein PurH (529 aa).

The 148-residue stretch at 1–148 (MQQRRPVRRA…KNHKDVAIVV (148 aa)) folds into the MGS-like domain.

This sequence belongs to the PurH family.

It catalyses the reaction (6R)-10-formyltetrahydrofolate + 5-amino-1-(5-phospho-beta-D-ribosyl)imidazole-4-carboxamide = 5-formamido-1-(5-phospho-D-ribosyl)imidazole-4-carboxamide + (6S)-5,6,7,8-tetrahydrofolate. The catalysed reaction is IMP + H2O = 5-formamido-1-(5-phospho-D-ribosyl)imidazole-4-carboxamide. It functions in the pathway purine metabolism; IMP biosynthesis via de novo pathway; 5-formamido-1-(5-phospho-D-ribosyl)imidazole-4-carboxamide from 5-amino-1-(5-phospho-D-ribosyl)imidazole-4-carboxamide (10-formyl THF route): step 1/1. Its pathway is purine metabolism; IMP biosynthesis via de novo pathway; IMP from 5-formamido-1-(5-phospho-D-ribosyl)imidazole-4-carboxamide: step 1/1. This is Bifunctional purine biosynthesis protein PurH from Salmonella schwarzengrund (strain CVM19633).